The chain runs to 314 residues: Vacuolar membrane protein FOSTERSB_4073 (314 aa).

Residues 32–60 are disordered; the sequence is KPTSSVVSETSSKSLPSLTSSAFSTSSGA. Residues 93–113 traverse the membrane as a helical segment; the sequence is VYIAVGAVIGAIFISILIWWL. A phosphoserine mark is found at serine 148, serine 254, and serine 274. A disordered region spans residues 240-309; the sequence is EERKLNLNRP…PSMFLDDVLN (70 aa). Over residues 254–269 the composition is skewed to basic and acidic residues; that stretch reads SPERKEKKINSMEGYH.

The protein belongs to the PRM5 family.

Its subcellular location is the vacuole membrane. In Saccharomyces cerevisiae (strain FostersB) (Baker's yeast), this protein is Vacuolar membrane protein FOSTERSB_4073.